Reading from the N-terminus, the 551-residue chain is Glucose-6-phosphate isomerase (551 aa).

The active-site Proton donor is glutamate 356. Active-site residues include histidine 387 and lysine 515.

It belongs to the GPI family.

The protein resides in the cytoplasm. The catalysed reaction is alpha-D-glucose 6-phosphate = beta-D-fructose 6-phosphate. Its pathway is carbohydrate biosynthesis; gluconeogenesis. The protein operates within carbohydrate degradation; glycolysis; D-glyceraldehyde 3-phosphate and glycerone phosphate from D-glucose: step 2/4. In terms of biological role, catalyzes the reversible isomerization of glucose-6-phosphate to fructose-6-phosphate. The chain is Glucose-6-phosphate isomerase from Blochmanniella pennsylvanica (strain BPEN).